Reading from the N-terminus, the 358-residue chain is Phosphate acyltransferase (358 aa).

It belongs to the PlsX family. In terms of assembly, homodimer. Probably interacts with PlsY.

Its subcellular location is the cytoplasm. It carries out the reaction a fatty acyl-[ACP] + phosphate = an acyl phosphate + holo-[ACP]. It functions in the pathway lipid metabolism; phospholipid metabolism. Functionally, catalyzes the reversible formation of acyl-phosphate (acyl-PO(4)) from acyl-[acyl-carrier-protein] (acyl-ACP). This enzyme utilizes acyl-ACP as fatty acyl donor, but not acyl-CoA. This chain is Phosphate acyltransferase, found in Escherichia fergusonii (strain ATCC 35469 / DSM 13698 / CCUG 18766 / IAM 14443 / JCM 21226 / LMG 7866 / NBRC 102419 / NCTC 12128 / CDC 0568-73).